We begin with the raw amino-acid sequence, 262 residues long: tRNA pseudouridine synthase B (262 aa).

The active-site Nucleophile is the Asp-77.

This sequence belongs to the pseudouridine synthase TruB family. Type 1 subfamily.

It carries out the reaction uridine(55) in tRNA = pseudouridine(55) in tRNA. Functionally, responsible for synthesis of pseudouridine from uracil-55 in the psi GC loop of transfer RNAs. The protein is tRNA pseudouridine synthase B of Protochlamydia amoebophila (strain UWE25).